The chain runs to 271 residues: NH(3)-dependent NAD(+) synthetase (271 aa).

43 to 50 contacts ATP; it reads GISGGQDS. Mg(2+) is bound at residue D49. R137 contacts deamido-NAD(+). T157 is an ATP binding site. Residue E162 participates in Mg(2+) binding. Positions 170 and 177 each coordinate deamido-NAD(+). Residues K186 and T208 each contribute to the ATP site. A deamido-NAD(+)-binding site is contributed by 257 to 258; it reads HK.

Belongs to the NAD synthetase family. Homodimer.

The enzyme catalyses deamido-NAD(+) + NH4(+) + ATP = AMP + diphosphate + NAD(+) + H(+). Its pathway is cofactor biosynthesis; NAD(+) biosynthesis; NAD(+) from deamido-NAD(+) (ammonia route): step 1/1. In terms of biological role, catalyzes the ATP-dependent amidation of deamido-NAD to form NAD. Uses ammonia as a nitrogen source. This Exiguobacterium sp. (strain ATCC BAA-1283 / AT1b) protein is NH(3)-dependent NAD(+) synthetase.